The primary structure comprises 840 residues: MVRVMLVRFGFLLLMISFVFLSNNTLGQQQDDDDDSAVYIVTLKQPPIVHLFEEQELKHKKSKFTPKLRPRNNSRKRHGKSKIPSVVQSHDSFLRKTLKGEKYIKLYSYHYLINGFALFINSQQAEKLSMRKEVANIVLDYSVRTATTYTPQFMGLPQGAWVKEGGFEIAGEGVIIGFIDTGIDPNHPSFNDNDSKRSYPIPKHFSGVCEVTPDFPSGSCNKKLIGARHFAQSAVTRGIFNSSEDYASPFDGDGHGTHTASVAAGNHGVPVIVSNHNFGYASGIAPRAFISVYKALYKSFGGFAADVVAAIDQAAQDGVDILSLSITPNRKPPGVATFFNPIDMALLSAVKAGIFVVQAAGNTGPAPKTMSSFSPWIFTVGASSHDRVYSNSLTLGNNVTIPGMGFAIPTDSGKMYKMISAFHALNNSTSVDKDMYVGECQDYENFDQDRVSGKLLICSYSARFVLGLSTIKQALDVAKNLSATGVIFYIDPYVLGFEINPTPMDMPGIIIPSVEDSKTLLKYYNSSIQRDVTTKEIVSFGAVAAIEGGLNANFSNRAPKVMYYSARGPDPEDNSFNDADVLKPNLVAPGNSIWGAWSSASTDSTEFEGEKFAMMSGTSMAAPHVAGVAALIKQSYPQFTPSTISSALSTTALLNDNKGSPIMAQRTYSNPDQSLYTATPSDMGSGFVNATAALDPGLVFDTSFEDYISFLCGINGSDTVVFNYTGFRCPANNTPVSGFDLNLPSITVSTLSGTQTFQRSMRNIAGNETYNVGWSPPYGVSMKVSPTQFSIAMGENQVLSVTLTVTKNSSSSSFGRIGLFGNTGHIVNIPVTVIAKIASS.

Residues 1 to 27 (MVRVMLVRFGFLLLMISFVFLSNNTLG) form the signal peptide. Positions 28–146 (QQQDDDDDSA…IVLDYSVRTA (119 aa)) are cleaved as a propeptide — activation peptide. Positions 38–146 (VYIVTLKQPP…IVLDYSVRTA (109 aa)) constitute an Inhibitor I9 domain. The segment covering 61 to 81 (KSKFTPKLRPRNNSRKRHGKS) has biased composition (basic residues). The tract at residues 61 to 85 (KSKFTPKLRPRNNSRKRHGKSKIPS) is disordered. An N-linked (GlcNAc...) asparagine glycan is attached at asparagine 72. The 547-residue stretch at 148–694 (TYTPQFMGLP…SGFVNATAAL (547 aa)) folds into the Peptidase S8 domain. The active-site Charge relay system is the aspartate 180. Residues asparagine 193 and asparagine 241 are each glycosylated (N-linked (GlcNAc...) asparagine). The active-site Charge relay system is histidine 255. 5 N-linked (GlcNAc...) asparagine glycosylation sites follow: asparagine 398, asparagine 427, asparagine 480, asparagine 525, and asparagine 553. Residues 418-513 (MISAFHALNN…MDMPGIIIPS (96 aa)) form the PA domain. Residue serine 619 is the Charge relay system of the active site. Asparagine 689, asparagine 715, asparagine 723, asparagine 767, and asparagine 808 each carry an N-linked (GlcNAc...) asparagine glycan.

The protein belongs to the peptidase S8 family.

Its subcellular location is the secreted. The protein is Subtilisin-like protease SBT2.3 of Arabidopsis thaliana (Mouse-ear cress).